The sequence spans 371 residues: Mannose-1-phosphate guanylyltransferase catalytic subunit beta (371 aa).

Residues 14 to 233 form a substrate-binding domain region; it reads RALILVGGYG…TGFWMDIGQP (220 aa). D122 contributes to the GDP-alpha-D-mannose binding site. Mg(2+) is bound at residue D122. K173 is a catalytic residue. D229 lines the GDP-alpha-D-mannose pocket. D229 is a Mg(2+) binding site. The hexapeptide repeat domain stretch occupies residues 256–371; that stretch reads YTGPGVVGNV…ASVPEPQIIM (116 aa).

It belongs to the transferase hexapeptide repeat family. In terms of assembly, component of the GMPPA-GMPPB mannose-1-phosphate guanylyltransferase complex composed of 4 Gmppa subunits and 8 Gmppb subunits; the complex is organized into three layers, a central layer made up of 2 Gmppa dimers sandwiched between two layers each made up of 2 Gmppb dimers. Gmppb catalytic activity is reduced when part of the complex and binding of GDP-alpha-D-Mannose by Gmppa induces allosteric feedback inhibition of Gmppb. The cofactor is Mg(2+).

The catalysed reaction is alpha-D-mannose 1-phosphate + GTP + H(+) = GDP-alpha-D-mannose + diphosphate. The protein operates within nucleotide-sugar biosynthesis; GDP-alpha-D-mannose biosynthesis; GDP-alpha-D-mannose from alpha-D-mannose 1-phosphate (GTP route): step 1/1. With respect to regulation, enzyme activity is reduced by incorporation into the GMPPA-GMPPB mannose-1-phosphate guanylyltransferase complex. Allosterically inhibited, when part of the GMPPA-GMPPB complex, by GDP-alpha-D-mannose binding to Gmppa. Catalytic subunit of the GMPPA-GMPPB mannose-1-phosphate guanylyltransferase complex. Catalyzes the formation of GDP-mannose, an essential precursor of glycan moieties of glycoproteins and glycolipids. Can catalyze the reverse reaction in vitro. Together with GMPPA regulates GDP-alpha-D-mannose levels. The protein is Mannose-1-phosphate guanylyltransferase catalytic subunit beta of Drosophila pseudoobscura pseudoobscura (Fruit fly).